Here is a 423-residue protein sequence, read N- to C-terminus: COP9 signalosome complex subunit 3 (423 aa).

Alanine 2 carries the post-translational modification N-acetylalanine. Positions 197–365 (NFERALYFYE…GMVSFHDNPE (169 aa)) constitute a PCI domain. The segment at 402–423 (QFVQKSMGSQEDDSGNKPSSYS) is disordered. Phosphoserine occurs at positions 407, 410, and 423.

It belongs to the CSN3 family. As to quaternary structure, component of the CSN complex, composed of COPS1/GPS1, COPS2, COPS3, COPS4, COPS5, COPS6, COPS7 (COPS7A or COPS7B), COPS8 and COPS9. In the complex, it probably interacts directly with COPS1, COPS4, COPS8 and COPS9. Interacts with CK2 and PKD. Interacts with the translation initiation factor EIF3S6 and IKBKG. Interacts with ERCC6.

The protein resides in the cytoplasm. The protein localises to the nucleus. Component of the COP9 signalosome complex (CSN), a complex involved in various cellular and developmental processes. The CSN complex is an essential regulator of the ubiquitin (Ubl) conjugation pathway by mediating the deneddylation of the cullin subunits of SCF-type E3 ligase complexes, leading to decrease the Ubl ligase activity of SCF-type complexes such as SCF, CSA or DDB2. The complex is also involved in phosphorylation of p53/TP53, c-jun/JUN, IkappaBalpha/NFKBIA, ITPK1 and IRF8/ICSBP, possibly via its association with CK2 and PKD kinases. CSN-dependent phosphorylation of TP53 and JUN promotes and protects degradation by the Ubl system, respectively. Essential to maintain the survival of epiblast cells and thus the development of the postimplantation embryo. The protein is COP9 signalosome complex subunit 3 (Cops3) of Rattus norvegicus (Rat).